Reading from the N-terminus, the 95-residue chain is UPF0473 protein PEPE_1260 (95 aa).

This sequence belongs to the UPF0473 family.

This Pediococcus pentosaceus (strain ATCC 25745 / CCUG 21536 / LMG 10740 / 183-1w) protein is UPF0473 protein PEPE_1260.